The following is a 185-amino-acid chain: Putative F-box protein At3g17400 (185 aa).

An F-box domain is found at 1 to 47 (MMTLSDLPSDLAEEVLSKIPVTSLRGVRATCKKWNTLSKDRSFTRKH).

The sequence is that of Putative F-box protein At3g17400 from Arabidopsis thaliana (Mouse-ear cress).